A 257-amino-acid chain; its full sequence is Hydroxyethylthiazole kinase (257 aa).

Met42 contacts substrate. ATP contacts are provided by Arg117 and Thr163. Ala190 serves as a coordination point for substrate.

The protein belongs to the Thz kinase family. The cofactor is Mg(2+).

The catalysed reaction is 5-(2-hydroxyethyl)-4-methylthiazole + ATP = 4-methyl-5-(2-phosphooxyethyl)-thiazole + ADP + H(+). It functions in the pathway cofactor biosynthesis; thiamine diphosphate biosynthesis; 4-methyl-5-(2-phosphoethyl)-thiazole from 5-(2-hydroxyethyl)-4-methylthiazole: step 1/1. Functionally, catalyzes the phosphorylation of the hydroxyl group of 4-methyl-5-beta-hydroxyethylthiazole (THZ). The protein is Hydroxyethylthiazole kinase of Roseobacter denitrificans (strain ATCC 33942 / OCh 114) (Erythrobacter sp. (strain OCh 114)).